Here is a 392-residue protein sequence, read N- to C-terminus: Queuine tRNA-ribosyltransferase (392 aa).

Residue aspartate 92 is the Proton acceptor of the active site. Substrate contacts are provided by residues 92 to 96 (DSGGF), aspartate 146, glutamine 188, and glycine 215. The tract at residues 246–252 (GVGSPED) is RNA binding. Aspartate 265 acts as the Nucleophile in catalysis. An RNA binding; important for wobble base 34 recognition region spans residues 270-274 (TRLGR). Zn(2+) contacts are provided by cysteine 303, cysteine 305, cysteine 308, and histidine 334.

The protein belongs to the queuine tRNA-ribosyltransferase family. Homodimer. Within each dimer, one monomer is responsible for RNA recognition and catalysis, while the other monomer binds to the replacement base PreQ1. Requires Zn(2+) as cofactor.

The enzyme catalyses 7-aminomethyl-7-carbaguanine + guanosine(34) in tRNA = 7-aminomethyl-7-carbaguanosine(34) in tRNA + guanine. It participates in tRNA modification; tRNA-queuosine biosynthesis. Functionally, catalyzes the base-exchange of a guanine (G) residue with the queuine precursor 7-aminomethyl-7-deazaguanine (PreQ1) at position 34 (anticodon wobble position) in tRNAs with GU(N) anticodons (tRNA-Asp, -Asn, -His and -Tyr). Catalysis occurs through a double-displacement mechanism. The nucleophile active site attacks the C1' of nucleotide 34 to detach the guanine base from the RNA, forming a covalent enzyme-RNA intermediate. The proton acceptor active site deprotonates the incoming PreQ1, allowing a nucleophilic attack on the C1' of the ribose to form the product. After dissociation, two additional enzymatic reactions on the tRNA convert PreQ1 to queuine (Q), resulting in the hypermodified nucleoside queuosine (7-(((4,5-cis-dihydroxy-2-cyclopenten-1-yl)amino)methyl)-7-deazaguanosine). The chain is Queuine tRNA-ribosyltransferase from Herpetosiphon aurantiacus (strain ATCC 23779 / DSM 785 / 114-95).